Reading from the N-terminus, the 290-residue chain is Nucleotide-binding protein Bpet0443 (290 aa).

ATP is bound at residue 9–16; that stretch reads GISGSGKS. 58 to 61 is a binding site for GTP; the sequence is DVRS.

This sequence belongs to the RapZ-like family.

Displays ATPase and GTPase activities. The chain is Nucleotide-binding protein Bpet0443 from Bordetella petrii (strain ATCC BAA-461 / DSM 12804 / CCUG 43448).